A 792-amino-acid polypeptide reads, in one-letter code: Leucine--tRNA ligase (792 aa).

The 'HIGH' region signature appears at 39-50 (PYPSAAGLHLGH). A 'KMSKS' region motif is present at residues 569-573 (KMSKS). Position 572 (K572) interacts with ATP.

Belongs to the class-I aminoacyl-tRNA synthetase family.

The protein localises to the cytoplasm. It carries out the reaction tRNA(Leu) + L-leucine + ATP = L-leucyl-tRNA(Leu) + AMP + diphosphate. This chain is Leucine--tRNA ligase, found in Mycoplasma genitalium (strain ATCC 33530 / DSM 19775 / NCTC 10195 / G37) (Mycoplasmoides genitalium).